We begin with the raw amino-acid sequence, 393 residues long: NAD(P)H-quinone oxidoreductase subunit H, chloroplastic (393 aa).

The protein belongs to the complex I 49 kDa subunit family. NDH is composed of at least 16 different subunits, 5 of which are encoded in the nucleus.

Its subcellular location is the plastid. It is found in the chloroplast thylakoid membrane. It carries out the reaction a plastoquinone + NADH + (n+1) H(+)(in) = a plastoquinol + NAD(+) + n H(+)(out). The enzyme catalyses a plastoquinone + NADPH + (n+1) H(+)(in) = a plastoquinol + NADP(+) + n H(+)(out). Its function is as follows. NDH shuttles electrons from NAD(P)H:plastoquinone, via FMN and iron-sulfur (Fe-S) centers, to quinones in the photosynthetic chain and possibly in a chloroplast respiratory chain. The immediate electron acceptor for the enzyme in this species is believed to be plastoquinone. Couples the redox reaction to proton translocation, and thus conserves the redox energy in a proton gradient. The sequence is that of NAD(P)H-quinone oxidoreductase subunit H, chloroplastic from Lotus japonicus (Lotus corniculatus var. japonicus).